Reading from the N-terminus, the 66-residue chain is Large ribosomal subunit protein bL35 (66 aa).

Composition is skewed to basic residues over residues 1 to 16 (MPKF…RFKK) and 23 to 45 (KRGH…RQLR). Residues 1 to 66 (MPKFKTHRAS…RIRQMLSQMK (66 aa)) form a disordered region.

It belongs to the bacterial ribosomal protein bL35 family.

This chain is Large ribosomal subunit protein bL35, found in Lacticaseibacillus casei (strain BL23) (Lactobacillus casei).